The sequence spans 272 residues: 3-methyl-2-oxobutanoate hydroxymethyltransferase (272 aa).

2 residues coordinate Mg(2+): aspartate 43 and aspartate 82. Residues 43 to 44, aspartate 82, and lysine 112 each bind 3-methyl-2-oxobutanoate; that span reads DS. Residue glutamate 114 coordinates Mg(2+). Glutamate 179 serves as the catalytic Proton acceptor.

It belongs to the PanB family. As to quaternary structure, homodecamer; pentamer of dimers. Requires Mg(2+) as cofactor.

Its subcellular location is the cytoplasm. The enzyme catalyses 3-methyl-2-oxobutanoate + (6R)-5,10-methylene-5,6,7,8-tetrahydrofolate + H2O = 2-dehydropantoate + (6S)-5,6,7,8-tetrahydrofolate. It functions in the pathway cofactor biosynthesis; (R)-pantothenate biosynthesis; (R)-pantoate from 3-methyl-2-oxobutanoate: step 1/2. Its function is as follows. Catalyzes the reversible reaction in which hydroxymethyl group from 5,10-methylenetetrahydrofolate is transferred onto alpha-ketoisovalerate to form ketopantoate. The chain is 3-methyl-2-oxobutanoate hydroxymethyltransferase from Staphylococcus aureus (strain Mu3 / ATCC 700698).